Consider the following 545-residue polypeptide: Transducer protein Htr7 (545 aa).

3 consecutive transmembrane segments (helical) span residues 10–30 (AVVAPLGDAVGAIGFGAAAAL), 44–64 (FWMAFTFASLLGVTWTVSLML), and 80–100 (PLMATTVAVFAIGGTATLAIV). Residues 111-157 (AQRRQEAEEERAEAERAREKAEQKQAEAERQTAEAESAKQDARERSA) are disordered. The span at 123-157 (EAERAREKAEQKQAEAERQTAEAESAKQDARERSA) shows a compositional bias: basic and acidic residues. The 54-residue stretch at 164–217 (ADLESQATEVGATLEAASDGDLTARVDATTDNAEIAEVATVVNDMLTTMERTID) folds into the HAMP domain. One can recognise a Methyl-accepting transducer domain in the interval 236–476 (GAKEIQDASQ…RVVSSVDDIA (241 aa)). Glutamate methyl ester (Glu) is present on glutamate 281. The interval 521-545 (LNEFRTEATGTAHGEATDAPAGQSD) is disordered. Residues 527–539 (EATGTAHGEATDA) are compositionally biased toward low complexity.

It belongs to the methyl-accepting chemotaxis (MCP) protein family. Post-translationally, methylated by CheR.

It is found in the cell membrane. Potentially involved in chemo- or phototactic signal transduction. The sequence is that of Transducer protein Htr7 (htr7) from Halobacterium salinarum (strain ATCC 29341 / DSM 671 / R1).